A 192-amino-acid polypeptide reads, in one-letter code: Probable thymidylate kinase (192 aa).

Gly7 to Ser14 contacts ATP.

This sequence belongs to the thymidylate kinase family.

It catalyses the reaction dTMP + ATP = dTDP + ADP. This is Probable thymidylate kinase from Methanobrevibacter smithii (strain ATCC 35061 / DSM 861 / OCM 144 / PS).